The primary structure comprises 304 residues: NuA3 HAT complex component PDP3 (304 aa).

The PWWP domain occupies 7 to 68 (TGDLVLCKVG…PSRLKELDQD (62 aa)). Residues 145–195 (KKNSISIKEDPEDNQKSNEEESKPNIKPSKKKRPTANSGGKSNSGNKKKVK) are disordered. Positions 151–168 (IKEDPEDNQKSNEEESKP) are enriched in basic and acidic residues.

Component of the NuA3 histone acetyltransferase (HAT) complex. The NuA3 HAT complex has 2 functionally distinct forms that participate in transcription. The NuA3a HAT complex is composed of at least NTO1, SAS3, TAF14, YNG1 and EAF6. The NuA3b HAT complex contains an additional subunit, PDP3.

Its subcellular location is the nucleus. It is found in the cytoplasm. Histone-binding component of the NuA3b histone acetyltransferase complex. Targets the NuA3b HAT complex via histone H3K36me3 to the coding regions of actively transcribed genes to coordinate transcription elongation. Stimulates elongation by RNA polymerase II in vitro. This chain is NuA3 HAT complex component PDP3, found in Saccharomyces cerevisiae (strain ATCC 204508 / S288c) (Baker's yeast).